A 1023-amino-acid polypeptide reads, in one-letter code: Presequence protease, mitochondrial (1023 aa).

A mitochondrion-targeting transit peptide spans 1–62; it reads MFRQSKTIIT…PDLFLTAVKL (62 aa). Residue histidine 99 coordinates Zn(2+). Catalysis depends on glutamate 102, which acts as the Proton acceptor. Positions 103 and 200 each coordinate Zn(2+). Residues cysteine 114 and cysteine 551 are joined by a disulfide bond.

This sequence belongs to the peptidase M16 family. PreP subfamily. As to quaternary structure, monomer and homodimer; homodimerization is induced by binding of the substrate. Zn(2+) is required as a cofactor. Post-translationally, a disulfide bond locks the enzyme in the closed conformation preventing substrate entry into the catalytic chamber.

The protein localises to the mitochondrion matrix. Mainly exists in a closed and catalytically competent conformation but a closed-to-open switch allows substrate entry into the catalytic chamber. Substrate binding induces closure and dimerization. A disulfide bond may lock the enzyme in a closed conformation preventing substrate entry into the catalytic chamber, participating in redox regulation of the enzyme. Inhibited by metal-chelating agents. Inhibited by nickel and zinc excess, and slightly activated by manganese. Its function is as follows. Metalloendopeptidase of the mitochondrial matrix that functions in peptide cleavage and degradation rather than in protein processing. Has an ATP-independent activity. Specifically cleaves peptides in the range of 5 to 65 residues. Shows a preference for cleavage after small polar residues and before basic residues, but without any positional preference. Degrades the transit peptides of mitochondrial proteins after their cleavage. Also degrades other unstructured peptides. The polypeptide is Presequence protease, mitochondrial (pitrm1) (Danio rerio (Zebrafish)).